A 260-amino-acid polypeptide reads, in one-letter code: Serine/threonine-protein acetyltransferase NGR_a02610 (260 aa).

Residues His-123 and Glu-143 contribute to the active site. His-123 is a CoA binding site. A CoA-binding site is contributed by 180 to 181; it reads KS. Cys-185 is an active-site residue.

This sequence belongs to the acetyltransferase YopJ family.

The enzyme catalyses L-threonyl-[protein] + acetyl-CoA = O-acetyl-L-threonyl-[protein] + CoA. It catalyses the reaction L-seryl-[protein] + acetyl-CoA = O-acetyl-L-seryl-[protein] + CoA. In terms of biological role, serine/threonine-protein acetyltransferase translocated into infected cells, which mediates acetylation of serine and threonine residues of host target proteins. The sequence is that of Serine/threonine-protein acetyltransferase NGR_a02610 from Sinorhizobium fredii (strain NBRC 101917 / NGR234).